Here is a 702-residue protein sequence, read N- to C-terminus: Polyribonucleotide nucleotidyltransferase (702 aa).

Residues aspartate 493 and aspartate 499 each coordinate Mg(2+). Residues 559-619 enclose the KH domain; that stretch reads PKVEIFNVDP…NLISQSKEYI (61 aa). An S1 motif domain is found at 643–702; that stretch reads GEEFLGRVQKVVEFGVFVELKEGVDGLLHNSKIKEKLEVGHEIKVKVAEIKNGKVSLDLA.

The protein belongs to the polyribonucleotide nucleotidyltransferase family. It depends on Mg(2+) as a cofactor.

Its subcellular location is the cytoplasm. The enzyme catalyses RNA(n+1) + phosphate = RNA(n) + a ribonucleoside 5'-diphosphate. In terms of biological role, involved in mRNA degradation. Catalyzes the phosphorolysis of single-stranded polyribonucleotides processively in the 3'- to 5'-direction. The chain is Polyribonucleotide nucleotidyltransferase from Campylobacter lari (strain RM2100 / D67 / ATCC BAA-1060).